The sequence spans 395 residues: Long-chain-alcohol dehydrogenase 1 (395 aa).

NAD(+)-binding positions include 98–102 (GSALD) and 141–144 (TTSG).

This sequence belongs to the iron-containing alcohol dehydrogenase family. As to quaternary structure, homooctamer.

It catalyses the reaction glycerol + NAD(+) = dihydroxyacetone + NADH + H(+). The catalysed reaction is a long-chain primary fatty alcohol + 2 NAD(+) + H2O = a long-chain fatty acid + 2 NADH + 3 H(+). Functionally, long-chain alkyl alcohol dehydrogenase that can oxidize a broad range of alkyl alcohols from ethanol to 1-triacontanol (C2 to C30) as well as 1,3-propanediol and acetaldehyde. The best substrate is ethanol. Also oxidizes glycerol. This Geobacillus thermodenitrificans (strain NG80-2) protein is Long-chain-alcohol dehydrogenase 1 (adh1).